Reading from the N-terminus, the 420-residue chain is Pyruvate dehydrogenase E1 component subunit alpha, mitochondrial (420 aa).

Residues 1 to 33 constitute a mitochondrion transit peptide; it reads MLAASFKRQPSQLVRGLGAVLRTPTRIGHVRTM. Residues histidine 112, tyrosine 138, arginine 139, alanine 177, glycine 185, valine 187, aspartate 216, glycine 217, alanine 218, asparagine 245, and tyrosine 247 each coordinate pyruvate. Residues tyrosine 138 and arginine 139 each contribute to the thiamine diphosphate site. Glycine 185, valine 187, aspartate 216, glycine 217, alanine 218, and asparagine 245 together coordinate thiamine diphosphate. Aspartate 216 contacts Mg(2+). Mg(2+)-binding residues include asparagine 245 and tyrosine 247. A thiamine diphosphate-binding site is contributed by histidine 312. Serine 313 carries the phosphoserine; by PDK1 and PDK2 modification.

In terms of assembly, pyruvate dehydrogenase (E1) is a tetramer of 2 alpha and 2 beta subunits. Eukaryotic pyruvate dehydrogenase (PDH) complexes are organized as a core consisting of the oligomeric dihydrolipoamide acetyl-transferase (E2), around which are arranged multiple copies of pyruvate dehydrogenase (E1), dihydrolipoamide dehydrogenase (E3) and protein X (E3BP) bound by non-covalent bonds. Thiamine diphosphate is required as a cofactor. Mg(2+) serves as cofactor. In terms of processing, phosphorylated at Ser-313 by pyruvate dehydrogenase kinases PKP1 (PDK1) and PKP2 (PDK2), and dephosphorylated by pyruvate dehydrogenase phosphatases PTC5 and PTC6.

Its subcellular location is the mitochondrion matrix. The catalysed reaction is N(6)-[(R)-lipoyl]-L-lysyl-[protein] + pyruvate + H(+) = N(6)-[(R)-S(8)-acetyldihydrolipoyl]-L-lysyl-[protein] + CO2. E1 activity is regulated by phosphorylation (inactivation) and dephosphorylation (activation) of the alpha subunit. The pyruvate dehydrogenase complex catalyzes the overall conversion of pyruvate to acetyl-CoA and CO(2). The protein is Pyruvate dehydrogenase E1 component subunit alpha, mitochondrial (PDA1) of Saccharomyces cerevisiae (strain ATCC 204508 / S288c) (Baker's yeast).